The sequence spans 209 residues: Thiamine-phosphate synthase (209 aa).

4-amino-2-methyl-5-(diphosphooxymethyl)pyrimidine is bound by residues Q37 to K41 and N69. 2 residues coordinate Mg(2+): D70 and D89. 4-amino-2-methyl-5-(diphosphooxymethyl)pyrimidine is bound at residue S108. T134–T136 lines the 2-[(2R,5Z)-2-carboxy-4-methylthiazol-5(2H)-ylidene]ethyl phosphate pocket. Residue K137 coordinates 4-amino-2-methyl-5-(diphosphooxymethyl)pyrimidine. 2-[(2R,5Z)-2-carboxy-4-methylthiazol-5(2H)-ylidene]ethyl phosphate-binding positions include G164 and V184 to S185.

It belongs to the thiamine-phosphate synthase family. The cofactor is Mg(2+).

It catalyses the reaction 2-[(2R,5Z)-2-carboxy-4-methylthiazol-5(2H)-ylidene]ethyl phosphate + 4-amino-2-methyl-5-(diphosphooxymethyl)pyrimidine + 2 H(+) = thiamine phosphate + CO2 + diphosphate. The catalysed reaction is 2-(2-carboxy-4-methylthiazol-5-yl)ethyl phosphate + 4-amino-2-methyl-5-(diphosphooxymethyl)pyrimidine + 2 H(+) = thiamine phosphate + CO2 + diphosphate. It carries out the reaction 4-methyl-5-(2-phosphooxyethyl)-thiazole + 4-amino-2-methyl-5-(diphosphooxymethyl)pyrimidine + H(+) = thiamine phosphate + diphosphate. Its pathway is cofactor biosynthesis; thiamine diphosphate biosynthesis; thiamine phosphate from 4-amino-2-methyl-5-diphosphomethylpyrimidine and 4-methyl-5-(2-phosphoethyl)-thiazole: step 1/1. Condenses 4-methyl-5-(beta-hydroxyethyl)thiazole monophosphate (THZ-P) and 2-methyl-4-amino-5-hydroxymethyl pyrimidine pyrophosphate (HMP-PP) to form thiamine monophosphate (TMP). In Methanobrevibacter smithii (strain ATCC 35061 / DSM 861 / OCM 144 / PS), this protein is Thiamine-phosphate synthase.